The following is a 429-amino-acid chain: Adenylosuccinate synthetase (429 aa).

Residues 15–21 (GDEGKGK) and 43–45 (GHV) contribute to the GTP site. Asp-16 functions as the Proton acceptor in the catalytic mechanism. Asp-16 and Gly-43 together coordinate Mg(2+). Residues 16 to 19 (DEGK), 41 to 44 (NAGH), Thr-131, Arg-145, Gln-225, Thr-240, and Arg-304 contribute to the IMP site. His-44 (proton donor) is an active-site residue. 300–306 (SNTKRPR) lines the substrate pocket. GTP is bound by residues Arg-306, 332-334 (LLD), and 414-416 (SVG).

Belongs to the adenylosuccinate synthetase family. As to quaternary structure, homodimer. Mg(2+) serves as cofactor.

It is found in the cytoplasm. The enzyme catalyses IMP + L-aspartate + GTP = N(6)-(1,2-dicarboxyethyl)-AMP + GDP + phosphate + 2 H(+). It functions in the pathway purine metabolism; AMP biosynthesis via de novo pathway; AMP from IMP: step 1/2. Its function is as follows. Plays an important role in the de novo pathway of purine nucleotide biosynthesis. Catalyzes the first committed step in the biosynthesis of AMP from IMP. This chain is Adenylosuccinate synthetase, found in Mesoplasma florum (strain ATCC 33453 / NBRC 100688 / NCTC 11704 / L1) (Acholeplasma florum).